A 197-amino-acid polypeptide reads, in one-letter code: Tyrosine-protein phosphatase-like protein OCA2 (197 aa).

Positions 10 to 160 (SPVVSTDVSL…FETNLKIPRN (151 aa)) constitute a Tyrosine-protein phosphatase domain. Phosphoserine is present on S181.

Belongs to the protein-tyrosine phosphatase family.

The protein resides in the cytoplasm. In terms of biological role, required for normal growth in the presence of linoleic acid hydroperoxide (LoaOOH). In Saccharomyces cerevisiae (strain ATCC 204508 / S288c) (Baker's yeast), this protein is Tyrosine-protein phosphatase-like protein OCA2 (OCA2).